The following is a 279-amino-acid chain: HTH-type transcriptional regulator HdfR (279 aa).

The HTH lysR-type domain occupies 1-58 (MDTELLKTFLEVSRTRHFGRAAESLYLTQSAVSFRIRQLENQLGVNLFTRHRNNIRLT). A DNA-binding region (H-T-H motif) is located at residues 18-37 (FGRAAESLYLTQSAVSFRIR).

It belongs to the LysR transcriptional regulatory family.

Functionally, negatively regulates the transcription of the flagellar master operon flhDC by binding to the upstream region of the operon. The chain is HTH-type transcriptional regulator HdfR from Escherichia coli O7:K1 (strain IAI39 / ExPEC).